The following is a 361-amino-acid chain: Molybdenum import ATP-binding protein ModC (361 aa).

The ABC transporter domain maps to 1 to 228 (MLNINIEKQF…EQMRPWVPLQ (228 aa)). 31–38 (GRSGAGKT) lines the ATP pocket. The Mop domain occupies 289 to 356 (GSSIRNLLRG…IKGVTMTQMD (68 aa)).

This sequence belongs to the ABC transporter superfamily. Molybdate importer (TC 3.A.1.8) family. In terms of assembly, the complex is composed of two ATP-binding proteins (ModC), two transmembrane proteins (ModB) and a solute-binding protein (ModA).

It is found in the cell inner membrane. It catalyses the reaction molybdate(out) + ATP + H2O = molybdate(in) + ADP + phosphate + H(+). Functionally, part of the ABC transporter complex ModABC involved in molybdenum import. Responsible for energy coupling to the transport system. The polypeptide is Molybdenum import ATP-binding protein ModC (Shewanella sp. (strain MR-4)).